The primary structure comprises 1211 residues: Diacylglycerol kinase eta (1211 aa).

The interval 1-66 (MAGAGSQHHP…QMRTKTSIKE (66 aa)) is disordered. Over residues 19–32 (AGASAVSPTAAGPG) the composition is skewed to low complexity. Positions 52 to 61 (VSTSGQMRTK) are enriched in polar residues. In terms of domain architecture, PH spans 62–155 (TSIKEGQLLK…WISSLKSVQS (94 aa)). 2 Phorbol-ester/DAG-type zinc fingers span residues 172–222 (MHNW…TNNC) and 244–295 (PHQW…HPVC). The 136-residue stretch at 325-460 (FCVSPLLVFV…LDRWSIMTYE (136 aa)) folds into the DAGKc domain. 2 disordered regions span residues 562–613 (SQAS…KPRE) and 634–694 (KVMD…SVAG). Acidic residues-rich tracts occupy residues 576–589 (PEED…DESL) and 653–662 (YDTETDEAKE). Residues 670–691 (SAKTTSQSPDAQASCGHPQTDS) show a composition bias toward polar residues. The SAM domain occupies 1143–1206 (WGTEEVAAWL…LQGIKELERN (64 aa)).

Belongs to the eukaryotic diacylglycerol kinase family. As to quaternary structure, interacts with RAF1 and BRAF. In terms of assembly, homooligomers. Heterooligomers. Oligomerization through the SAM domain inhibits the diacylglycerol kinase activity. Heterooligomerizes with SAM domain-containing isoforms of DGKD. Does not form homooligomers. Phosphorylated. Phosphorylation does not inhibit catalytic activity. As to expression, widely expressed. Detected in the granulosa cells of the primary and secondary follicles. Expressed in mature follicles and corpus lutea. Expressed in the oviductal epithelium. In the uterus, strongly expressed in the luminal epithelium. Detected in the uterine glands. In terms of tissue distribution, detected in ovary and uterus (at protein level). Specifically expressed in testis. Detected in the inner area of the testis. Strongly expressed in the secondary spermatocytes and the round spermatids and weakly detected in the primary spermatocytes.

The protein resides in the cytoplasm. The protein localises to the cell membrane. Its subcellular location is the cytoskeleton. The catalysed reaction is a 1,2-diacyl-sn-glycerol + ATP = a 1,2-diacyl-sn-glycero-3-phosphate + ADP + H(+). The enzyme catalyses 1,2-di-(9Z-octadecenoyl)-sn-glycerol + ATP = 1,2-di-(9Z-octadecenoyl)-sn-glycero-3-phosphate + ADP + H(+). It participates in lipid metabolism; glycerolipid metabolism. Its function is as follows. Diacylglycerol kinase that converts diacylglycerol/DAG into phosphatidic acid/phosphatidate/PA and regulates the respective levels of these two bioactive lipids. Thereby, acts as a central switch between the signaling pathways activated by these second messengers with different cellular targets and opposite effects in numerous biological processes. Plays a key role in promoting cell growth. Activates the Ras/B-Raf/C-Raf/MEK/ERK signaling pathway induced by EGF. Regulates the recruitment of RAF1 and BRAF from cytoplasm to membranes and their heterodimerization. The protein is Diacylglycerol kinase eta of Mus musculus (Mouse).